Reading from the N-terminus, the 657-residue chain is Chemoreceptor McpA (657 aa).

The Cytoplasmic portion of the chain corresponds to 1–5; the sequence is MKRIR. The helical transmembrane segment at 6-29 threads the bilayer; sequence LVDLPLIIKIGFAPAFALLMLAVM. Over 30-188 the chain is Periplasmic; sequence AGGAILVQKS…ESESAKRQAQ (159 aa). A helical transmembrane segment spans residues 189 to 212; it reads ATAAMSVTIIMSLLTLGAVGALAF. Topologically, residues 213–657 are cytoplasmic; the sequence is LTVMTTRKSI…APASDGWEEF (445 aa). 2 consecutive HAMP domains span residues 216-269 and 297-349; these read MTTR…HLEQ and QEAS…ETMK. Residues 354–583 enclose the Methyl-accepting transducer domain; the sequence is STDGLSTGAD…QSTAATHSLK (230 aa). Gln378 bears the Glutamate methyl ester (Gln) mark. Residues Glu385 and Glu392 each carry the glutamate methyl ester (Glu) modification. Gln574 carries the glutamate methyl ester (Gln) modification. A disordered region spans residues 634–657; that stretch reads ARPGRSSGSAALAQAPASDGWEEF.

It belongs to the methyl-accepting chemotaxis (MCP) protein family.

It is found in the cell membrane. Functionally, chemotactic-signal transducers respond to changes in the concentration of attractants and repellents in the environment, transduce a signal from the outside to the inside of the cell, and facilitate sensory adaptation through the variation of the level of methylation. Attractants increase the level of methylation while repellents decrease the level of methylation. In Caulobacter vibrioides (strain ATCC 19089 / CIP 103742 / CB 15) (Caulobacter crescentus), this protein is Chemoreceptor McpA (mcpA).